The sequence spans 145 residues: Acidic phospholipase A2 homolog textilotoxin C chain (145 aa).

A signal peptide spans 1-19 (MHPAHLLVLLGVYVSLLGA). Residues 20–27 (ARIPPLPL) constitute a propeptide that is removed on maturation. 7 disulfides stabilise this stretch: Cys-38–Cys-98, Cys-54–Cys-144, Cys-56–Cys-72, Cys-71–Cys-125, Cys-78–Cys-118, Cys-87–Cys-111, and Cys-105–Cys-116.

The protein belongs to the phospholipase A2 family. Group I subfamily. D49 sub-subfamily. As to quaternary structure, heterohexamer. 2 forms exist: 2 A or 2 B chains, 2 C chains and 2 covalently-linked D chains, and 1 A or 1 B, 1 C, 2 covalently-linked D chains and 2 differentially glycosylated covalently-linked D chains. Textilotoxin was originally described as pentameric. In terms of tissue distribution, expressed by the venom gland.

It is found in the secreted. Functionally, snake venom oligomeric phospholipase A2 that has potent presynaptic neurotoxicity. Chain C is not itself neurotoxic, but it is essential for the neurotoxicity of textilotoxin. Chain C possesses a very low phospholipase activity. The protein is Acidic phospholipase A2 homolog textilotoxin C chain of Pseudonaja textilis (Eastern brown snake).